The primary structure comprises 613 residues: Na(+)/H(+) antiporter NhaA 1 (613 aa).

The interval 1–23 is disordered; the sequence is MTEASARTIGPLPSRFSRDPKTP. The tract at residues 1–408 is na(+)/H(+) antiporter NhaA; sequence MTEASARTIG…DPARQDEARV (408 aa). The next 11 helical transmembrane spans lie at 29-49, 81-101, 110-130, 138-158, 168-188, 191-211, 231-251, 300-320, 337-357, 377-397, and 408-428; these read AAAA…NSPW, GLMA…FVIG, AVPV…FLTF, QAWG…LAVI, IFLL…IALF, DDLK…LAMV, IALY…AVLI, AVGP…NAGV, WGIV…ATAL, GGAA…DVAI, and VGVL…FRIT. The 205-residue stretch at 409-613 folds into the Thioredoxin domain; sequence GVLIASVLAF…SLIRALEAGR (205 aa).

In the N-terminal section; belongs to the NhaA Na(+)/H(+) (TC 2.A.33) antiporter family.

The protein localises to the cell membrane. It catalyses the reaction Na(+)(in) + 2 H(+)(out) = Na(+)(out) + 2 H(+)(in). Na(+)/H(+) antiporter that extrudes sodium in exchange for external protons. The polypeptide is Na(+)/H(+) antiporter NhaA 1 (Mycobacterium sp. (strain KMS)).